The primary structure comprises 364 residues: uncharacterized protein (364 aa).

This is an uncharacterized protein from Saccharum officinarum (Sugarcane).